We begin with the raw amino-acid sequence, 126 residues long: Glycine cleavage system H protein (126 aa).

One can recognise a Lipoyl-binding domain in the interval Thr24 to Lys106. At Lys65 the chain carries N6-lipoyllysine.

The protein belongs to the GcvH family. The glycine cleavage system is composed of four proteins: P, T, L and H. (R)-lipoate serves as cofactor.

Its function is as follows. The glycine cleavage system catalyzes the degradation of glycine. The H protein shuttles the methylamine group of glycine from the P protein to the T protein. This Psychrobacter arcticus (strain DSM 17307 / VKM B-2377 / 273-4) protein is Glycine cleavage system H protein.